Here is a 1274-residue protein sequence, read N- to C-terminus: DENN domain-containing protein 5B (1274 aa).

N-acetylserine is present on S2. In terms of domain architecture, uDENN spans D39–S244. Phosphoserine occurs at positions 49 and 178. Residues E263–V399 enclose the cDENN domain. Residues L401–E581 form the dDENN domain. Residues L772–T932 enclose the RUN 1 domain. S822 carries the phosphoserine modification. A helical membrane pass occupies residues L916 to I936. In terms of domain architecture, PLAT spans I936 to I1044. T1062 is subject to Phosphothreonine. Residues S1068, S1076, and S1079 each carry the phosphoserine modification. The RUN 2 domain maps to T1118–S1267.

This sequence belongs to the RAB6IP1 family.

The protein resides in the membrane. In terms of biological role, guanine nucleotide exchange factor (GEF) which may activate RAB39A and/or RAB39B. Promotes the exchange of GDP to GTP, converting inactive GDP-bound Rab proteins into their active GTP-bound form. This is DENN domain-containing protein 5B (Dennd5b) from Mus musculus (Mouse).